We begin with the raw amino-acid sequence, 205 residues long: Outer-membrane lipoprotein LolB (205 aa).

An N-terminal signal peptide occupies residues 1–17 (MFLRHCITFTLIALLAG). Cys18 carries the N-palmitoyl cysteine lipid modification. Cys18 is lipidated: S-diacylglycerol cysteine.

This sequence belongs to the LolB family. Monomer.

The protein resides in the cell outer membrane. Its function is as follows. Plays a critical role in the incorporation of lipoproteins in the outer membrane after they are released by the LolA protein. This Pseudomonas putida (strain GB-1) protein is Outer-membrane lipoprotein LolB.